The following is a 264-amino-acid chain: Phosphate import ATP-binding protein PstB (264 aa).

The region spanning 11-250 is the ABC transporter domain; that stretch reads LKAEALSVYY…DTTEKIFDSP (240 aa). 43–50 contacts ATP; sequence GPSGCGKS.

The protein belongs to the ABC transporter superfamily. Phosphate importer (TC 3.A.1.7) family. The complex is composed of two ATP-binding proteins (PstB), two transmembrane proteins (PstC and PstA) and a solute-binding protein (PstS).

Its subcellular location is the cell inner membrane. The catalysed reaction is phosphate(out) + ATP + H2O = ADP + 2 phosphate(in) + H(+). Part of the ABC transporter complex PstSACB involved in phosphate import. Responsible for energy coupling to the transport system. In Synechococcus elongatus (strain ATCC 33912 / PCC 7942 / FACHB-805) (Anacystis nidulans R2), this protein is Phosphate import ATP-binding protein PstB.